The sequence spans 218 residues: Small ribosomal subunit protein uS3c (218 aa).

In terms of domain architecture, KH type-2 spans 47-118 (VQKNIRISSG…KLNIAITRIS (72 aa)).

The protein belongs to the universal ribosomal protein uS3 family. Part of the 30S ribosomal subunit.

It is found in the plastid. Its subcellular location is the chloroplast. The polypeptide is Small ribosomal subunit protein uS3c (rps3) (Aethionema cordifolium (Lebanon stonecress)).